Here is a 338-residue protein sequence, read N- to C-terminus: Solute carrier family 35 member G3 (338 aa).

The tract at residues 1-24 (MAGSHPYFNQPDSTHPSPPSAPPS) is disordered. 9 helical membrane-spanning segments follow: residues 37-57 (TSGL…VGPL), 67-87 (LPSL…ALLL), 105-125 (FFCA…VQVV), 160-180 (CGLL…LWTL), 185-205 (TGVY…ALSL), 221-241 (TVAF…LFVL), 250-270 (LLSW…FTCV), 281-301 (LVCA…YYML), and 305-325 (VAPS…IITA). Positions 49-174 (LPAGFVGPLS…CILGLIIIVG (126 aa)) constitute an EamA 1 domain. Positions 272-325 (YAVTKAHPALVCAVLHSEVVVALILQYYMLHETVAPSDIVAAGVVLGSIAIITA) constitute an EamA 2 domain.

It belongs to the SLC35G solute transporter family. As to expression, expressed in testis.

The protein localises to the membrane. In Homo sapiens (Human), this protein is Solute carrier family 35 member G3 (SLC35G3).